The primary structure comprises 281 residues: Ribosomal RNA large subunit methyltransferase J (281 aa).

S-adenosyl-L-methionine is bound by residues H19, H42, S101, E119, 144-145 (NG), and D165. D165 (proton acceptor) is an active-site residue.

The protein belongs to the RlmJ family. In terms of assembly, monomer.

It carries out the reaction adenosine(2030) in 23S rRNA + S-adenosyl-L-methionine = N(6)-methyladenosine(2030) in 23S rRNA + S-adenosyl-L-homocysteine + H(+). Functionally, specifically methylates the adenine in position 2030 of 23S rRNA. The protein is Ribosomal RNA large subunit methyltransferase J of Haemophilus influenzae (strain ATCC 51907 / DSM 11121 / KW20 / Rd).